Reading from the N-terminus, the 337-residue chain is Transaldolase (337 aa).

The Nuclear localization signal motif lies at 1 to 10 (MSGSPVKRQR). At Lys115 the chain carries N6-acetyllysine. The active-site Schiff-base intermediate with substrate is Lys142. Lys219 bears the N6-acetyllysine mark. Ser237 and Ser256 each carry phosphoserine. N6-acetyllysine occurs at positions 269, 286, and 321.

The protein belongs to the transaldolase family. Type 1 subfamily. In terms of assembly, homodimer. Interacts with KPNA1 and KPNA4.

It localises to the nucleus. The protein localises to the cytoplasm. The enzyme catalyses D-sedoheptulose 7-phosphate + D-glyceraldehyde 3-phosphate = D-erythrose 4-phosphate + beta-D-fructose 6-phosphate. Its pathway is carbohydrate degradation; pentose phosphate pathway; D-glyceraldehyde 3-phosphate and beta-D-fructose 6-phosphate from D-ribose 5-phosphate and D-xylulose 5-phosphate (non-oxidative stage): step 2/3. Its function is as follows. Catalyzes the rate-limiting step of the non-oxidative phase in the pentose phosphate pathway. Catalyzes the reversible conversion of sedheptulose-7-phosphate and D-glyceraldehyde 3-phosphate into erythrose-4-phosphate and beta-D-fructose 6-phosphate. This is Transaldolase (TALDO1) from Cricetulus griseus (Chinese hamster).